A 257-amino-acid polypeptide reads, in one-letter code: MTTLVELQSVTVTFGDRHVLDQVSMKLERGQITTLIGPNGAGKSTLVKVITGLRKPSTGHVVRQKGIRIGYVPQKLQLNSTLPLTVDRFMRLAGRYDENARKEALSLVGGTHLHHSDMHSLSGGEMQRVLLARALLQKPDVLVLDEPVQGVDVNGQLELYNLIQSLRDILNCSILMVSHDLHLVMAKTDNVICLHHHICCSGEPDTITNHPSYVALFGQQQSEQLALYHHHHNHEHDLAGSPVGPCQHNKQHGHDNA.

In terms of domain architecture, ABC transporter spans 5–220 (VELQSVTVTF…PSYVALFGQQ (216 aa)). 37 to 44 (GPNGAGKS) provides a ligand contact to ATP. Residues 234–257 (HEHDLAGSPVGPCQHNKQHGHDNA) are disordered.

The protein belongs to the ABC transporter superfamily. Zinc importer (TC 3.A.1.15.5) family. As to quaternary structure, the complex is composed of two ATP-binding proteins (ZnuC), two transmembrane proteins (ZnuB) and a solute-binding protein (ZnuA).

It is found in the cell inner membrane. The catalysed reaction is Zn(2+)(out) + ATP(in) + H2O(in) = Zn(2+)(in) + ADP(in) + phosphate(in) + H(+)(in). Its function is as follows. Part of the ABC transporter complex ZnuABC involved in zinc import. Responsible for energy coupling to the transport system. This is Zinc import ATP-binding protein ZnuC from Photobacterium profundum (strain SS9).